The primary structure comprises 51 residues: Insulin (51 aa).

3 cysteine pairs are disulfide-bonded: Cys7/Cys37, Cys19/Cys50, and Cys36/Cys41.

The protein belongs to the insulin family. As to quaternary structure, heterodimer of a B chain and an A chain linked by two disulfide bonds.

The protein localises to the secreted. Functionally, insulin decreases blood glucose concentration. It increases cell permeability to monosaccharides, amino acids and fatty acids. It accelerates glycolysis, the pentose phosphate cycle, and glycogen synthesis in liver. The protein is Insulin (INS) of Elephas maximus (Indian elephant).